The chain runs to 505 residues: Maturase K (505 aa).

The protein belongs to the intron maturase 2 family. MatK subfamily.

The protein resides in the plastid. It localises to the chloroplast. Usually encoded in the trnK tRNA gene intron. Probably assists in splicing its own and other chloroplast group II introns. The protein is Maturase K of Amaranthus greggii (Gregg's amaranth).